A 123-amino-acid polypeptide reads, in one-letter code: Holo-[acyl-carrier-protein] synthase (123 aa).

2 residues coordinate Mg(2+): Asp9 and Glu57.

Belongs to the P-Pant transferase superfamily. AcpS family. It depends on Mg(2+) as a cofactor.

The protein resides in the cytoplasm. The enzyme catalyses apo-[ACP] + CoA = holo-[ACP] + adenosine 3',5'-bisphosphate + H(+). Transfers the 4'-phosphopantetheine moiety from coenzyme A to a Ser of acyl-carrier-protein. This chain is Holo-[acyl-carrier-protein] synthase, found in Streptomyces coelicolor (strain ATCC BAA-471 / A3(2) / M145).